A 281-amino-acid polypeptide reads, in one-letter code: Putative rRNA methyltransferase YqxC (281 aa).

Residues E6–G67 form the S4 RNA-binding domain.

The protein belongs to the TlyA family.

The polypeptide is Putative rRNA methyltransferase YqxC (yqxC) (Bacillus subtilis (strain 168)).